Consider the following 93-residue polypeptide: Large ribosomal subunit protein uL23cz/uL23cy (93 aa).

This sequence belongs to the universal ribosomal protein uL23 family. As to quaternary structure, part of the 50S ribosomal subunit.

The protein localises to the plastid. It is found in the chloroplast. In terms of biological role, binds to 23S rRNA. This chain is Large ribosomal subunit protein uL23cz/uL23cy (rpl23-A), found in Lotus japonicus (Lotus corniculatus var. japonicus).